The primary structure comprises 749 residues: Formate acetyltransferase (749 aa).

The 617-residue stretch at 3-619 (ETNKNHATAW…KTGNTPDGRK (617 aa)) folds into the PFL domain. The S-acetylcysteine intermediate role is filled by Cys413. The active-site Cysteine radical intermediate is the Cys414. Residues 626–749 (PGANPMHGRD…VISRTFHESM (124 aa)) form the Glycine radical domain. Position 724 is a glycine radical (Gly724).

It belongs to the glycyl radical enzyme (GRE) family. PFL subfamily. In terms of assembly, homodimer.

The protein resides in the cytoplasm. The enzyme catalyses formate + acetyl-CoA = pyruvate + CoA. It functions in the pathway fermentation; pyruvate fermentation; formate from pyruvate: step 1/1. Functionally, catalyzes the conversion of pyruvate to formate and acetyl-CoA. The polypeptide is Formate acetyltransferase (pflB) (Staphylococcus aureus (strain USA300)).